A 67-amino-acid polypeptide reads, in one-letter code: Cold shock protein ScoF (67 aa).

The 61-residue stretch at 4-64 (GTVKWFNSEK…GQKGPQAENI (61 aa)) folds into the CSD domain.

It localises to the cytoplasm. This Streptomyces coelicolor (strain ATCC BAA-471 / A3(2) / M145) protein is Cold shock protein ScoF (scoF).